Consider the following 255-residue polypeptide: ATP synthase subunit b 1 (255 aa).

The helical transmembrane segment at 5–22 threads the bilayer; sequence WITVAAQIVNFLLLIWLL.

This sequence belongs to the ATPase B chain family. F-type ATPases have 2 components, F(1) - the catalytic core - and F(0) - the membrane proton channel. F(1) has five subunits: alpha(3), beta(3), gamma(1), delta(1), epsilon(1). F(0) has three main subunits: a(1), b(2) and c(10-14). The alpha and beta chains form an alternating ring which encloses part of the gamma chain. F(1) is attached to F(0) by a central stalk formed by the gamma and epsilon chains, while a peripheral stalk is formed by the delta and b chains.

It localises to the cell inner membrane. In terms of biological role, f(1)F(0) ATP synthase produces ATP from ADP in the presence of a proton or sodium gradient. F-type ATPases consist of two structural domains, F(1) containing the extramembraneous catalytic core and F(0) containing the membrane proton channel, linked together by a central stalk and a peripheral stalk. During catalysis, ATP synthesis in the catalytic domain of F(1) is coupled via a rotary mechanism of the central stalk subunits to proton translocation. Functionally, component of the F(0) channel, it forms part of the peripheral stalk, linking F(1) to F(0). In Dinoroseobacter shibae (strain DSM 16493 / NCIMB 14021 / DFL 12), this protein is ATP synthase subunit b 1.